The sequence spans 213 residues: Ras-related protein RabK1 (213 aa).

Position 14–21 (G14–L21) interacts with GTP. Residues G36–F43 carry the Effector region motif. GTP-binding positions include N61–S65 and T119–D122.

The protein belongs to the small GTPase superfamily. Rab family.

This is Ras-related protein RabK1 (rabK1) from Dictyostelium discoideum (Social amoeba).